The following is a 447-amino-acid chain: Putative branched-chain amino acid carrier protein SERP0977 (447 aa).

The next 12 membrane-spanning stretches (helical) occupy residues 5-25, 40-60, 74-94, 114-134, 143-163, 193-213, 229-249, 290-310, 317-337, 350-370, 382-402, and 417-437; these read TWII…LIFP, ILAF…VGAL, PRFS…LFAI, GNLA…YLCL, IGSL…IKGF, GYLT…VNAI, IIAG…LGYI, LLGI…IVSV, IIPK…SFIL, VPVL…ILIA, IPLI…QGWI, and LEWF…SYFV.

The protein belongs to the branched chain amino acid transporter family.

It is found in the cell membrane. Its function is as follows. Component of the transport system for branched-chain amino acids (leucine, isoleucine and valine), which is coupled to a proton motive force. This chain is Putative branched-chain amino acid carrier protein SERP0977, found in Staphylococcus epidermidis (strain ATCC 35984 / DSM 28319 / BCRC 17069 / CCUG 31568 / BM 3577 / RP62A).